Here is a 423-residue protein sequence, read N- to C-terminus: Glutamate-1-semialdehyde 2,1-aminomutase (423 aa).

Lys266 bears the N6-(pyridoxal phosphate)lysine mark.

Belongs to the class-III pyridoxal-phosphate-dependent aminotransferase family. HemL subfamily. As to quaternary structure, homodimer. It depends on pyridoxal 5'-phosphate as a cofactor.

The protein localises to the cytoplasm. It catalyses the reaction (S)-4-amino-5-oxopentanoate = 5-aminolevulinate. It functions in the pathway porphyrin-containing compound metabolism; protoporphyrin-IX biosynthesis; 5-aminolevulinate from L-glutamyl-tRNA(Glu): step 2/2. The sequence is that of Glutamate-1-semialdehyde 2,1-aminomutase from Nitratidesulfovibrio vulgaris (strain ATCC 29579 / DSM 644 / CCUG 34227 / NCIMB 8303 / VKM B-1760 / Hildenborough) (Desulfovibrio vulgaris).